The chain runs to 318 residues: Ribose-phosphate pyrophosphokinase 1 (318 aa).

ATP contacts are provided by residues 43–45 and 102–103; these read DGE and RQ. Mg(2+) contacts are provided by His136 and Asp176. Lys199 is a catalytic residue. D-ribose 5-phosphate contacts are provided by residues Arg201, Asp225, and 229–233; that span reads DTAGT.

Belongs to the ribose-phosphate pyrophosphokinase family. Class I subfamily. As to quaternary structure, homohexamer. The cofactor is Mg(2+).

It is found in the cytoplasm. The catalysed reaction is D-ribose 5-phosphate + ATP = 5-phospho-alpha-D-ribose 1-diphosphate + AMP + H(+). The protein operates within metabolic intermediate biosynthesis; 5-phospho-alpha-D-ribose 1-diphosphate biosynthesis; 5-phospho-alpha-D-ribose 1-diphosphate from D-ribose 5-phosphate (route I): step 1/1. Functionally, involved in the biosynthesis of the central metabolite phospho-alpha-D-ribosyl-1-pyrophosphate (PRPP) via the transfer of pyrophosphoryl group from ATP to 1-hydroxyl of ribose-5-phosphate (Rib-5-P). The protein is Ribose-phosphate pyrophosphokinase 1 of Listeria innocua serovar 6a (strain ATCC BAA-680 / CLIP 11262).